The primary structure comprises 171 residues: Protein BTG1 (171 aa).

Residue serine 159 is modified to Phosphoserine.

The protein belongs to the BTG family. In terms of assembly, interacts with CNOT7 and CNOT8.

Its function is as follows. Anti-proliferative protein. The protein is Protein BTG1 (BTG1) of Homo sapiens (Human).